The sequence spans 214 residues: ATP phosphoribosyltransferase (214 aa).

It belongs to the ATP phosphoribosyltransferase family. Short subfamily. As to quaternary structure, heteromultimer composed of HisG and HisZ subunits.

Its subcellular location is the cytoplasm. The enzyme catalyses 1-(5-phospho-beta-D-ribosyl)-ATP + diphosphate = 5-phospho-alpha-D-ribose 1-diphosphate + ATP. It functions in the pathway amino-acid biosynthesis; L-histidine biosynthesis; L-histidine from 5-phospho-alpha-D-ribose 1-diphosphate: step 1/9. Its function is as follows. Catalyzes the condensation of ATP and 5-phosphoribose 1-diphosphate to form N'-(5'-phosphoribosyl)-ATP (PR-ATP). Has a crucial role in the pathway because the rate of histidine biosynthesis seems to be controlled primarily by regulation of HisG enzymatic activity. This is ATP phosphoribosyltransferase from Azoarcus sp. (strain BH72).